A 596-amino-acid polypeptide reads, in one-letter code: Probable translation initiation factor IF-2 (596 aa).

The region spanning 3–220 (IRSPIVSVLG…MLLGLAQEYL (218 aa)) is the tr-type G domain. A G1 region spans residues 12–19 (GHVDHGKT). 12-19 (GHVDHGKT) contacts GTP. The interval 37-41 (GITQH) is G2. The G3 stretch occupies residues 76-79 (DTPG). Residues 76–80 (DTPGH) and 130–133 (NKID) each bind GTP. A G4 region spans residues 130-133 (NKID). A G5 region spans residues 198-200 (SAK).

Belongs to the TRAFAC class translation factor GTPase superfamily. Classic translation factor GTPase family. IF-2 subfamily.

Functionally, function in general translation initiation by promoting the binding of the formylmethionine-tRNA to ribosomes. Seems to function along with eIF-2. The polypeptide is Probable translation initiation factor IF-2 (Methanobrevibacter smithii (strain ATCC 35061 / DSM 861 / OCM 144 / PS)).